Reading from the N-terminus, the 729-residue chain is DNA topoisomerase 3 (729 aa).

Residues 3 to 136 (KKAVLAEKPS…VKRLWISSVT (134 aa)) form the Toprim domain. Mg(2+) contacts are provided by Glu9 and Asp105. In terms of domain architecture, Topo IA-type catalytic spans 153-590 (YETLYAAAAA…EMKEYAKAVV (438 aa)). An interaction with DNA region spans residues 187 to 192 (SCGRVQ). Residue Tyr311 is the O-(5'-phospho-DNA)-tyrosine intermediate of the active site. The interval 680 to 708 (FEQRRKQNKHKNVSKREVQSYMKKQNKQD) is disordered.

Belongs to the type IA topoisomerase family. It depends on Mg(2+) as a cofactor.

It carries out the reaction ATP-independent breakage of single-stranded DNA, followed by passage and rejoining.. In terms of biological role, releases the supercoiling and torsional tension of DNA, which is introduced during the DNA replication and transcription, by transiently cleaving and rejoining one strand of the DNA duplex. Introduces a single-strand break via transesterification at a target site in duplex DNA. The scissile phosphodiester is attacked by the catalytic tyrosine of the enzyme, resulting in the formation of a DNA-(5'-phosphotyrosyl)-enzyme intermediate and the expulsion of a 3'-OH DNA strand. The free DNA strand then undergoes passage around the unbroken strand, thus removing DNA supercoils. Finally, in the religation step, the DNA 3'-OH attacks the covalent intermediate to expel the active-site tyrosine and restore the DNA phosphodiester backbone. In Shouchella clausii (strain KSM-K16) (Alkalihalobacillus clausii), this protein is DNA topoisomerase 3.